A 297-amino-acid chain; its full sequence is GTPase Era (297 aa).

One can recognise an Era-type G domain in the interval 3–171 (KSGFVSIVGR…IKVIQNYLEE (169 aa)). The G1 stretch occupies residues 11–18 (GRPNVGKS). GTP is bound at residue 11–18 (GRPNVGKS). The G2 stretch occupies residues 37–41 (QTTRN). Residues 58–61 (DTPG) form a G3 region. GTP contacts are provided by residues 58–62 (DTPGI) and 120–123 (NKID). The tract at residues 120 to 123 (NKID) is G4. Residues 150-152 (ISA) form a G5 region. Residues 194–280 (IREKVLHYLN…NLQLWVKVKE (87 aa)) form the KH type-2 domain.

The protein belongs to the TRAFAC class TrmE-Era-EngA-EngB-Septin-like GTPase superfamily. Era GTPase family. As to quaternary structure, monomer.

The protein localises to the cytoplasm. Its subcellular location is the cell membrane. Its function is as follows. An essential GTPase that binds both GDP and GTP, with rapid nucleotide exchange. Plays a role in 16S rRNA processing and 30S ribosomal subunit biogenesis and possibly also in cell cycle regulation and energy metabolism. The polypeptide is GTPase Era (Clostridioides difficile (strain 630) (Peptoclostridium difficile)).